The chain runs to 36 residues: Pancreatic polypeptide (36 aa).

At Phe36 the chain carries Phenylalanine amide.

The protein belongs to the NPY family.

The protein resides in the secreted. Its function is as follows. Hormone secreted by pancreatic cells that acts as a regulator of pancreatic and gastrointestinal functions. This chain is Pancreatic polypeptide (ppy), found in Alligator mississippiensis (American alligator).